Here is a 293-residue protein sequence, read N- to C-terminus: Formamidopyrimidine-DNA glycosylase (293 aa).

P2 functions as the Schiff-base intermediate with DNA in the catalytic mechanism. E3 functions as the Proton donor in the catalytic mechanism. K58 functions as the Proton donor; for beta-elimination activity in the catalytic mechanism. DNA contacts are provided by H104, R123, and R166. The segment at 257-293 (QVYDREGDKCRTPACKGAVKRFTQNGRSTFWCPVCQT) adopts an FPG-type zinc-finger fold. R283 serves as the catalytic Proton donor; for delta-elimination activity.

This sequence belongs to the FPG family. In terms of assembly, monomer. The cofactor is Zn(2+).

It carries out the reaction Hydrolysis of DNA containing ring-opened 7-methylguanine residues, releasing 2,6-diamino-4-hydroxy-5-(N-methyl)formamidopyrimidine.. It catalyses the reaction 2'-deoxyribonucleotide-(2'-deoxyribose 5'-phosphate)-2'-deoxyribonucleotide-DNA = a 3'-end 2'-deoxyribonucleotide-(2,3-dehydro-2,3-deoxyribose 5'-phosphate)-DNA + a 5'-end 5'-phospho-2'-deoxyribonucleoside-DNA + H(+). In terms of biological role, involved in base excision repair of DNA damaged by oxidation or by mutagenic agents. Acts as a DNA glycosylase that recognizes and removes damaged bases. Has a preference for oxidized purines, such as 7,8-dihydro-8-oxoguanine (8-oxoG). Has AP (apurinic/apyrimidinic) lyase activity and introduces nicks in the DNA strand. Cleaves the DNA backbone by beta-delta elimination to generate a single-strand break at the site of the removed base with both 3'- and 5'-phosphates. This Nitrobacter winogradskyi (strain ATCC 25391 / DSM 10237 / CIP 104748 / NCIMB 11846 / Nb-255) protein is Formamidopyrimidine-DNA glycosylase.